Consider the following 329-residue polypeptide: Phosphate acetyltransferase (329 aa).

It belongs to the phosphate acetyltransferase and butyryltransferase family.

The protein localises to the cytoplasm. It carries out the reaction acetyl-CoA + phosphate = acetyl phosphate + CoA. Its pathway is metabolic intermediate biosynthesis; acetyl-CoA biosynthesis; acetyl-CoA from acetate: step 2/2. The polypeptide is Phosphate acetyltransferase (pta) (Corynebacterium glutamicum (strain ATCC 13032 / DSM 20300 / JCM 1318 / BCRC 11384 / CCUG 27702 / LMG 3730 / NBRC 12168 / NCIMB 10025 / NRRL B-2784 / 534)).